The sequence spans 194 residues: Adenylate kinase (194 aa).

10-15 lines the ATP pocket; the sequence is GAGKGT. The NMP stretch occupies residues 30–59; sequence STGDMLRAAVAQQSEIGKRAKAVMDAGQLV. AMP is bound by residues T31, R36, 57-59, 85-88, and Q92; these read QLV and GYPR. The LID stretch occupies residues 126 to 142; it reads SRVAETIAKGGQVRSDD. R127 provides a ligand contact to ATP. Residues R139 and R150 each contribute to the AMP site. A178 contributes to the ATP binding site.

Belongs to the adenylate kinase family. As to quaternary structure, monomer.

It is found in the cytoplasm. It catalyses the reaction AMP + ATP = 2 ADP. It functions in the pathway purine metabolism; AMP biosynthesis via salvage pathway; AMP from ADP: step 1/1. Its function is as follows. Catalyzes the reversible transfer of the terminal phosphate group between ATP and AMP. Plays an important role in cellular energy homeostasis and in adenine nucleotide metabolism. This is Adenylate kinase from Brucella anthropi (strain ATCC 49188 / DSM 6882 / CCUG 24695 / JCM 21032 / LMG 3331 / NBRC 15819 / NCTC 12168 / Alc 37) (Ochrobactrum anthropi).